Reading from the N-terminus, the 227-residue chain is ATP-dependent dethiobiotin synthetase BioD (227 aa).

Residue Asp13 to Tyr18 coordinates ATP. Thr17 contributes to the Mg(2+) binding site. Lys38 is a catalytic residue. Ser42 is a binding site for substrate. Residues Asp55, Glu116 to Gly119, and Asn179 to Asn180 contribute to the ATP site. Residues Asp55 and Glu116 each contribute to the Mg(2+) site.

It belongs to the dethiobiotin synthetase family. As to quaternary structure, homodimer. It depends on Mg(2+) as a cofactor.

The protein localises to the cytoplasm. The catalysed reaction is (7R,8S)-7,8-diammoniononanoate + CO2 + ATP = (4R,5S)-dethiobiotin + ADP + phosphate + 3 H(+). It functions in the pathway cofactor biosynthesis; biotin biosynthesis; biotin from 7,8-diaminononanoate: step 1/2. Catalyzes a mechanistically unusual reaction, the ATP-dependent insertion of CO2 between the N7 and N8 nitrogen atoms of 7,8-diaminopelargonic acid (DAPA, also called 7,8-diammoniononanoate) to form a ureido ring. The polypeptide is ATP-dependent dethiobiotin synthetase BioD (Clostridium botulinum (strain Okra / Type B1)).